The chain runs to 275 residues: Autophagy protein 5 (275 aa).

An N-acetylmethionine modification is found at Met1. Lys130 is covalently cross-linked (Glycyl lysine isopeptide (Lys-Gly) (interchain with G-Cter in ATG12)).

This sequence belongs to the ATG5 family. Forms a conjugate with ATG12. Part of the minor complex composed of 4 sets of ATG12-ATG5 and ATG16L1 (400 kDa); this complex interacts with ATG3 leading to disruption of ATG7 interaction and promotion of ATG8-like proteins lipidation. Forms an 800-kDa complex composed of ATG12-ATG5 and ATG16L2. The ATG12-ATG5 conjugate interacts with RAB33A; this interaction is bridged by ATG16L1 and promotes ATG12-ATG5-ATG16L1 complex recruitment to phagophores. Interacts with TECPR1; the interaction is direct and does not take place when ATG16L1 is associated with the ATG5-ATG12 conjugate. Interacts with DHX58/RIG-1, IFIH1/MDA5 and MAVS/IPS-1 in monomeric form as well as in ATG12-ATG5 conjugate form. The interaction with MAVS is further enhanced upon vesicular stomatitis virus (VSV) infection. Interacts with ATG3. Interacts with ATG7 and ATG10. Interacts with FADD. Interacts with Bassoon/BSN; this interaction is important for the regulation of presynaptic autophagy. Interacts with ATG16L2. Conjugated to ATG12; which is essential for autophagy, but is not required for association with isolation membrane. Post-translationally, acetylated by EP300. As to expression, ubiquitous.

Its subcellular location is the cytoplasm. The protein resides in the preautophagosomal structure membrane. Involved in autophagic vesicle formation. Conjugation with ATG12, through a ubiquitin-like conjugating system involving ATG7 as an E1-like activating enzyme and ATG10 as an E2-like conjugating enzyme, is essential for its function. The ATG12-ATG5 conjugate acts as an E3-like enzyme which is required for lipidation of ATG8 family proteins and their association to the vesicle membranes. Involved in mitochondrial quality control after oxidative damage, and in subsequent cellular longevity. Plays a critical role in multiple aspects of lymphocyte development and is essential for both B and T lymphocyte survival and proliferation. Required for optimal processing and presentation of antigens for MHC II. Involved in the maintenance of axon morphology and membrane structures, as well as in normal adipocyte differentiation. Promotes primary ciliogenesis through removal of OFD1 from centriolar satellites and degradation of IFT20 via the autophagic pathway. As part of the ATG8 conjugation system with ATG12 and ATG16L1, required for recruitment of LRRK2 to stressed lysosomes and induction of LRRK2 kinase activity in response to lysosomal stress. In terms of biological role, may play an important role in the apoptotic process, possibly within the modified cytoskeleton. Its expression is a relatively late event in the apoptotic process, occurring downstream of caspase activity. Plays a crucial role in IFN-gamma-induced autophagic cell death by interacting with FADD. Its function is as follows. (Microbial infection) May act as a proviral factor. In association with ATG12, negatively regulates the innate antiviral immune response by impairing the type I IFN production pathway upon vesicular stomatitis virus (VSV) infection. This Mus musculus (Mouse) protein is Autophagy protein 5.